We begin with the raw amino-acid sequence, 266 residues long: MKAVVLTLAVLFLTGSQARHFWQQDEPQSPWDRVKDLATVYVDAIKDSGRDYVSQFEASALGKQLNLKLLDNWDSLTTSFSKLREQLGPVTQEFWDNLEKETEALRQEMNKDVEEMKTKVQPYLDEFQKKWQEEVELYRQKVEPLGSELREGARQKLQELQEKLSPLGEELRDRARTHVDSLRTQLAPYSEELRQRLASRLEALKESGGASLADYHAKASEQLSALSEKAKPALEDLRQGLLPVLESFKVSLLSALEEASKKLNAQ.

The N-terminal stretch at 1 to 18 (MKAVVLTLAVLFLTGSQA) is a signal peptide. Tandem repeats lie at residues 67–88 (LKLL…EQLG) and 89–110 (PVTQ…QEMN). The 10 X approximate tandem repeats stretch occupies residues 67-266 (LKLLDNWDSL…EEASKKLNAQ (200 aa)). A Methionine sulfoxide modification is found at methionine 109. A 3; half-length repeat occupies 111–121 (KDVEEMKTKVQ). 5 repeat units span residues 122–143 (PYLD…QKVE), 144–165 (PLGS…EKLS), 166–187 (PLGE…TQLA), 188–209 (PYSE…ESGG), and 210–231 (ASLA…EKAK). A 9; half-length repeat occupies 232-242 (PALEDLRQGLL). Residues 243-266 (PVLESFKVSLLSALEEASKKLNAQ) form repeat 10.

It belongs to the apolipoprotein A1/A4/E family. In terms of assembly, homodimer. Interacts with APOA1BP and CLU. Component of a sperm activating protein complex (SPAP), consisting of APOA1, an immunoglobulin heavy chain, an immunoglobulin light chain and albumin. Interacts with NDRG1. Interacts with SCGB3A2. Interacts with NAXE and YJEFN3. Glycosylated. In terms of processing, palmitoylated. Post-translationally, phosphorylation sites are present in the extracellular medium. As to expression, major protein of plasma HDL, also found in chylomicrons.

The protein resides in the secreted. Its function is as follows. Participates in the reverse transport of cholesterol from tissues to the liver for excretion by promoting cholesterol efflux from tissues and by acting as a cofactor for the lecithin cholesterol acyltransferase (LCAT). As part of the SPAP complex, activates spermatozoa motility. The protein is Apolipoprotein A-I (APOA1) of Carlito syrichta (Philippine tarsier).